Consider the following 475-residue polypeptide: Aspartyl/glutamyl-tRNA(Asn/Gln) amidotransferase subunit B (475 aa).

The protein belongs to the GatB/GatE family. GatB subfamily. In terms of assembly, heterotrimer of A, B and C subunits.

The catalysed reaction is L-glutamyl-tRNA(Gln) + L-glutamine + ATP + H2O = L-glutaminyl-tRNA(Gln) + L-glutamate + ADP + phosphate + H(+). It carries out the reaction L-aspartyl-tRNA(Asn) + L-glutamine + ATP + H2O = L-asparaginyl-tRNA(Asn) + L-glutamate + ADP + phosphate + 2 H(+). Allows the formation of correctly charged Asn-tRNA(Asn) or Gln-tRNA(Gln) through the transamidation of misacylated Asp-tRNA(Asn) or Glu-tRNA(Gln) in organisms which lack either or both of asparaginyl-tRNA or glutaminyl-tRNA synthetases. The reaction takes place in the presence of glutamine and ATP through an activated phospho-Asp-tRNA(Asn) or phospho-Glu-tRNA(Gln). This chain is Aspartyl/glutamyl-tRNA(Asn/Gln) amidotransferase subunit B, found in Bacillus mycoides (strain KBAB4) (Bacillus weihenstephanensis).